A 1292-amino-acid polypeptide reads, in one-letter code: Calcium-transporting ATPase 2 (1292 aa).

The disordered stretch occupies residues 1 to 105 (MPTYNDDDDS…EQASSKSSTS (105 aa)). The Cytoplasmic segment spans residues 1–236 (MPTYNDDDDS…RLMLEAFKDK (236 aa)). Positions 23 to 41 (KPSSSQFLGVPSSNYNQRE) are enriched in polar residues. The span at 44–60 (SRSGSSTISREPSSSGT) shows a compositional bias: low complexity. Residues 68–78 (DSMKESYDKNK) are compositionally biased toward basic and acidic residues. A helical membrane pass occupies residues 237-257 (VLILLSIAAVVSLALGLYQTF). At 258–273 (GQPPTLDPITGKPEPR) the chain is on the vacuolar side. Residues 274–294 (VEWVEGVAIMAAIVIVVTVGG) traverse the membrane as a helical segment. Topologically, residues 295–448 (VNDWQKELQF…QLRLSRVADA (154 aa)) are cytoplasmic. Residues 449–469 (IAKLGGAASALLFIVLLIEFL) form a helical membrane-spanning segment. The Vacuolar portion of the chain corresponds to 470-488 (VRLKSNDSSSKNKGQEFLQ). The chain crosses the membrane as a helical span at residues 489 to 509 (ILIVSVTLLVVAVPEGLPLAV). Ca(2+) contacts are provided by Val-498 and Glu-503. Topologically, residues 510-938 (TLALAFATNR…GRTVNDAVKK (429 aa)) are cytoplasmic. Asp-545 serves as the catalytic 4-aspartylphosphate intermediate. Residues Asp-545 and Thr-547 each coordinate Mg(2+). ATP contacts are provided by residues Thr-547, Glu-638, Lys-691, Arg-736, 807-809 (TGD), Arg-856, and Lys-862. Residue Asp-881 participates in Mg(2+) binding. Position 884 (Asn-884) interacts with ATP. A helical transmembrane segment spans residues 939–959 (FLQFQITVNITAVFLTIISAV). Asn-947 lines the Ca(2+) pocket. Residues 960–966 (ASTDQSS) lie on the Vacuolar side of the membrane. A helical membrane pass occupies residues 967 to 987 (VLTAVQLLWVNLIMDTLAALA). Asn-977 and Asp-981 together coordinate Ca(2+). Topologically, residues 988–1016 (LATDPPTPEVLKRKPEKPGASLFTFDMWK) are cytoplasmic. A helical transmembrane segment spans residues 1017–1037 (MIICQSMYQLAVTLVLHFAGN). At 1038 to 1084 (SIFHYPSNTADMNTIVFNTFVWLQLFNEINNRRLDNKLNIFERINHN) the chain is on the vacuolar side. The helical transmembrane segment at 1085–1105 (FLFIAIFVIVAGIQVIIVFFG) threads the bilayer. Over 1106-1115 (GAAFSVKRID) the chain is Cytoplasmic. A helical membrane pass occupies residues 1116-1136 (GKGWAISIVFGVISIPLGALI). At 1137–1292 (RCVPNNFLRK…ALDKKSSNVH (156 aa)) the chain is on the vacuolar side.

Belongs to the cation transport ATPase (P-type) (TC 3.A.3) family.

It localises to the vacuole membrane. It catalyses the reaction Ca(2+)(in) + ATP + H2O = Ca(2+)(out) + ADP + phosphate + H(+). In terms of biological role, this magnesium-dependent enzyme catalyzes the hydrolysis of ATP coupled with the transport of calcium. Transports the calcium to the vacuole and participates in the control of the cytosolic free calcium. This is Calcium-transporting ATPase 2 (pmc1) from Schizosaccharomyces pombe (strain 972 / ATCC 24843) (Fission yeast).